The sequence spans 370 residues: Probable endopolygalacturonase A (370 aa).

Positions 1–19 (MPSAKPLFCLATLAGAALA) are cleaved as a signal peptide. A propeptide spanning residues 20-32 (APAPSRVSDFTKR) is cleaved from the precursor. A disulfide bridge links cysteine 35 with cysteine 50. PbH1 repeat units follow at residues 162–192 (SDNLVIEDVTIDNSDGDSEGGHNTDGFDISE), 193–214 (STYITITGATVKNQDDCVAINS), 215–235 (GENIYFSGGTCSGGHGLSIGS), 244–265 (VKNVTFIDSTVSDSENGVRIKT), 273–295 (VEDITYSNIQLSGISDYGIVIEQ), and 307–352 (SNGV…DITG). The active-site Proton donor is the aspartate 207. Cysteine 209 and cysteine 225 are disulfide-bonded. Histidine 229 is an active-site residue. A glycan (N-linked (GlcNAc...) asparagine) is linked at asparagine 246. 2 disulfides stabilise this stretch: cysteine 335–cysteine 340 and cysteine 359–cysteine 368.

Belongs to the glycosyl hydrolase 28 family.

It localises to the secreted. The catalysed reaction is (1,4-alpha-D-galacturonosyl)n+m + H2O = (1,4-alpha-D-galacturonosyl)n + (1,4-alpha-D-galacturonosyl)m.. Its function is as follows. Involved in maceration and soft-rotting of plant tissue. Hydrolyzes the 1,4-alpha glycosidic bonds of de-esterified pectate in the smooth region of the plant cell wall. This is Probable endopolygalacturonase A (pgaA) from Aspergillus niger (strain ATCC MYA-4892 / CBS 513.88 / FGSC A1513).